Consider the following 380-residue polypeptide: Alcohol dehydrogenase 2 (380 aa).

Zn(2+) contacts are provided by Cys48, Thr50, His70, Cys100, Cys103, Cys106, Cys114, and Cys178. Positions 50 and 70 each coordinate an alcohol. Residue Thr50 participates in NAD(+) binding. NAD(+)-binding positions include 203–208 (GLGAVG), Asp227, Arg232, Thr273, Val296, 296–298 (VGV), Phe323, and Arg373.

This sequence belongs to the zinc-containing alcohol dehydrogenase family. In terms of assembly, homodimer. Homotetramer. Requires Zn(2+) as cofactor.

It is found in the cytoplasm. The catalysed reaction is a primary alcohol + NAD(+) = an aldehyde + NADH + H(+). The enzyme catalyses a secondary alcohol + NAD(+) = a ketone + NADH + H(+). In Solanum lycopersicum (Tomato), this protein is Alcohol dehydrogenase 2 (ADH2).